Reading from the N-terminus, the 569-residue chain is Dihydroxy-acid dehydratase (569 aa).

Residue Cys-61 coordinates [2Fe-2S] cluster. Asp-93 contributes to the Mg(2+) binding site. Residue Cys-134 participates in [2Fe-2S] cluster binding. Residues Asp-135 and Lys-136 each coordinate Mg(2+). An N6-carboxylysine modification is found at Lys-136. Cys-211 lines the [2Fe-2S] cluster pocket. Glu-462 is a binding site for Mg(2+). The active-site Proton acceptor is Ser-488.

It belongs to the IlvD/Edd family. In terms of assembly, homodimer. Requires [2Fe-2S] cluster as cofactor. The cofactor is Mg(2+).

It catalyses the reaction (2R)-2,3-dihydroxy-3-methylbutanoate = 3-methyl-2-oxobutanoate + H2O. The enzyme catalyses (2R,3R)-2,3-dihydroxy-3-methylpentanoate = (S)-3-methyl-2-oxopentanoate + H2O. The protein operates within amino-acid biosynthesis; L-isoleucine biosynthesis; L-isoleucine from 2-oxobutanoate: step 3/4. It participates in amino-acid biosynthesis; L-valine biosynthesis; L-valine from pyruvate: step 3/4. Functions in the biosynthesis of branched-chain amino acids. Catalyzes the dehydration of (2R,3R)-2,3-dihydroxy-3-methylpentanoate (2,3-dihydroxy-3-methylvalerate) into 2-oxo-3-methylpentanoate (2-oxo-3-methylvalerate) and of (2R)-2,3-dihydroxy-3-methylbutanoate (2,3-dihydroxyisovalerate) into 2-oxo-3-methylbutanoate (2-oxoisovalerate), the penultimate precursor to L-isoleucine and L-valine, respectively. This chain is Dihydroxy-acid dehydratase, found in Tropheryma whipplei (strain TW08/27) (Whipple's bacillus).